The sequence spans 246 residues: Virulence plasmid protein pGP6-D (246 aa).

The protein belongs to the UPF0137 (pGP6-D) family.

The chain is Virulence plasmid protein pGP6-D from Chlamydia psittaci (Chlamydophila psittaci).